A 214-amino-acid polypeptide reads, in one-letter code: uncharacterized protein (214 aa).

The signal sequence occupies residues 1-17 (MWCFIVFLTIFLPTLEG). N-linked (GlcNAc...) asparagine glycans are attached at residues Asn88 and Asn139.

As to expression, component of the acid-insoluble organic matrix of calcified layers of the shell (at protein level).

Its subcellular location is the secreted. This is an uncharacterized protein from Lottia gigantea (Giant owl limpet).